The primary structure comprises 494 residues: tRNA-2-methylthio-N(6)-dimethylallyladenosine synthase (494 aa).

Positions 12–131 (PTYRVVTYGC…LPVLLKRARH (120 aa)) constitute an MTTase N-terminal domain. Positions 21, 60, 94, 168, 172, and 175 each coordinate [4Fe-4S] cluster. Positions 154–385 (RDSAYSAWVS…ELVDDIAWQE (232 aa)) constitute a Radical SAM core domain. One can recognise a TRAM domain in the interval 387-457 (KAQVGRAVEV…PHHLVADGGL (71 aa)).

The protein belongs to the methylthiotransferase family. MiaB subfamily. Monomer. [4Fe-4S] cluster is required as a cofactor.

The protein localises to the cytoplasm. It catalyses the reaction N(6)-dimethylallyladenosine(37) in tRNA + (sulfur carrier)-SH + AH2 + 2 S-adenosyl-L-methionine = 2-methylsulfanyl-N(6)-dimethylallyladenosine(37) in tRNA + (sulfur carrier)-H + 5'-deoxyadenosine + L-methionine + A + S-adenosyl-L-homocysteine + 2 H(+). In terms of biological role, catalyzes the methylthiolation of N6-(dimethylallyl)adenosine (i(6)A), leading to the formation of 2-methylthio-N6-(dimethylallyl)adenosine (ms(2)i(6)A) at position 37 in tRNAs that read codons beginning with uridine. This Cutibacterium acnes (strain DSM 16379 / KPA171202) (Propionibacterium acnes) protein is tRNA-2-methylthio-N(6)-dimethylallyladenosine synthase.